The chain runs to 354 residues: Uroporphyrinogen decarboxylase (354 aa).

Substrate-binding positions include Arg-27–Arg-31, Asp-77, Tyr-154, Ser-209, and His-327.

This sequence belongs to the uroporphyrinogen decarboxylase family. In terms of assembly, homodimer.

The protein localises to the cytoplasm. The catalysed reaction is uroporphyrinogen III + 4 H(+) = coproporphyrinogen III + 4 CO2. It functions in the pathway porphyrin-containing compound metabolism; protoporphyrin-IX biosynthesis; coproporphyrinogen-III from 5-aminolevulinate: step 4/4. Catalyzes the decarboxylation of four acetate groups of uroporphyrinogen-III to yield coproporphyrinogen-III. In Shewanella denitrificans (strain OS217 / ATCC BAA-1090 / DSM 15013), this protein is Uroporphyrinogen decarboxylase.